We begin with the raw amino-acid sequence, 207 residues long: ATP-dependent Clp protease proteolytic subunit (207 aa).

The propeptide occupies 1-14 (MSYSGERDNLAPHM). Serine 111 (nucleophile) is an active-site residue. Histidine 136 is a catalytic residue.

The protein belongs to the peptidase S14 family. In terms of assembly, fourteen ClpP subunits assemble into 2 heptameric rings which stack back to back to give a disk-like structure with a central cavity, resembling the structure of eukaryotic proteasomes. Component of the ClpAP and ClpXP complexes.

The protein localises to the cytoplasm. It carries out the reaction Hydrolysis of proteins to small peptides in the presence of ATP and magnesium. alpha-casein is the usual test substrate. In the absence of ATP, only oligopeptides shorter than five residues are hydrolyzed (such as succinyl-Leu-Tyr-|-NHMec, and Leu-Tyr-Leu-|-Tyr-Trp, in which cleavage of the -Tyr-|-Leu- and -Tyr-|-Trp bonds also occurs).. Its function is as follows. Cleaves peptides in various proteins in a process that requires ATP hydrolysis. Has a chymotrypsin-like activity. Plays a major role in the degradation of misfolded proteins. The protein is ATP-dependent Clp protease proteolytic subunit of Salmonella paratyphi A (strain ATCC 9150 / SARB42).